Consider the following 70-residue polypeptide: UPF0270 protein VV1_1320 (70 aa).

Belongs to the UPF0270 family.

The chain is UPF0270 protein VV1_1320 from Vibrio vulnificus (strain CMCP6).